A 343-amino-acid chain; its full sequence is MGEYIMEKNTIILGIETSCDETAVAVVKNGTEIIANVVASQIESHKRFGGVVPEIASRHHVEEITVVLEEALKEANITFDDIDAIAVTEGPGLVGALLIGVNAAKAVAFAHDIPLVGVHHIAGHIYANRLVKEVQFPLLSLVVSGGHTELVYMKEHGSFEVIGETRDDAAGEAYDKVARTLSMPYPGGPHIDRLAHEGKPTIDLPRAWLEPDSYDFSFSGLKSAVINTVHNAKQRGIEIAPEDLAASFQESVIDVLVTKASRAADAYNVKQVLLAGGVAANKGLRARLEAEFAQKENVELIIPPLSLCTDNAAMIAAAGTIAYEQGKRATLALNANPGLDIEA.

Positions 120 and 124 each coordinate Fe cation. Substrate contacts are provided by residues 142-146, Asp175, Gly188, Asp192, and Asn281; that span reads VVSGG. Asp310 is a binding site for Fe cation.

This sequence belongs to the KAE1 / TsaD family. Requires Fe(2+) as cofactor.

The protein localises to the cytoplasm. It catalyses the reaction L-threonylcarbamoyladenylate + adenosine(37) in tRNA = N(6)-L-threonylcarbamoyladenosine(37) in tRNA + AMP + H(+). Its function is as follows. Required for the formation of a threonylcarbamoyl group on adenosine at position 37 (t(6)A37) in tRNAs that read codons beginning with adenine. Is involved in the transfer of the threonylcarbamoyl moiety of threonylcarbamoyl-AMP (TC-AMP) to the N6 group of A37, together with TsaE and TsaB. TsaD likely plays a direct catalytic role in this reaction. The sequence is that of tRNA N6-adenosine threonylcarbamoyltransferase from Bacillus thuringiensis (strain Al Hakam).